The following is a 1104-amino-acid chain: MPRRQDIQKILLLGSGPIVIGQACEFDYSGTQACKALREEGYEVVLVNSNPATIMTDPETADRTYIEPLTPELVEKVIARERPDALLPTMGGQTALNIAVALAKNGVLDQYNVELIGAKLPAIEKAEDRKLFNEAMDKIGVKVCPSGTASSLDESKAIARRIGTYPLIIRPAFTMGGTGGGIAYNQEEFEEMAQVGIDASPVSQILIDQSLLGWKEYELEVMRDLADNVVIICSIENIDPMGIHTGDSITVAPAQTLTDKEYQRLRDMAIKIIREIGVETGGSNIQFAVNPVNGDVVVIEMNPRVSRSSALSSKATGFPIAKMAAKLAVGYTLDEIRNDITKKTPASFEPTIDYVVTKVPRFAFEKFPGSEPVLTTQMKSVGEAMAIGRTFNESFQKALRSLETGRAGWGCDKAEKLPSGEQIRAQLRTPNPDRIFAVRHALQLGMSPEEIYELTAIDPWFLDKMQQLLEVEKFLKRTPLKQLTREQMYAVKRDGYSDRQIAFATKTTEDEVRAYRKELGVTPVYKTVDTCAAEFEAFTPYYYSTYEEETEVIPASKPKVMILGGGPNRIGQGIEFDYCCCHAAYALKGAGYETIMVNSNPETVSTDYDTSDRLYFEPLTKEDVLNIIEAENPVGIIVQFGGQTPLKLALPLQDYLRQVGNGSLVIGNGNEETAITDDQLPITKIWGTSPDSIDSAEDRERFEKILQKLNISQPPNGIARSYEDALIVAKRIGYPVVVRPSYVLGGRAMEIVYSDTELERYMTFAVQVEPEHPILIDKFLENAIEVDVDAIADHTGRVVIGGIMEHIEQAGIHSGDSACSLPSISLPPAVLNQIRTWTVQLAQELSVVGLMNIQFAVIGASSYSPQVYILEANPRASRTVPFVSKATGVPLAKLASLIMSGKTLEELNFTQEVIPSHIAVKEAVLPFNKFPGTDTILGPEMRSTGEVMGIDSDFGRAFAKAELGAGERLPLTGTVFVSMSDRDKSAAVPVVREFIDLGFKVMATFGTRRVLLENGLNVELVLKLHEGRPHVIDAIKNQKIQLIINTPSGEEAQTDARLIRRTGLAYKIPIITTIAGAKATVAAIRSMQNTTLDVKTIQEYCPNF.

The carboxyphosphate synthetic domain stretch occupies residues 1 to 403 (MPRRQDIQKI…SFQKALRSLE (403 aa)). Residues Arg-129, Arg-170, Gly-176, Gly-177, Gln-209, Leu-211, Glu-216, Gly-242, Ile-243, His-244, Gln-286, and Glu-300 each contribute to the ATP site. An ATP-grasp 1 domain is found at 133–329 (NEAMDKIGVK…IAKMAAKLAV (197 aa)). Gln-286, Glu-300, and Asn-302 together coordinate Mg(2+). Positions 286, 300, and 302 each coordinate Mn(2+). Positions 404–552 (TGRAGWGCDK…YSTYEEETEV (149 aa)) are oligomerization domain. The tract at residues 553–966 (IPASKPKVMI…AFAKAELGAG (414 aa)) is carbamoyl phosphate synthetic domain. The ATP-grasp 2 domain maps to 703–900 (EKILQKLNIS…LAKLASLIMS (198 aa)). Residues Arg-739, Lys-778, Leu-780, Glu-785, Gly-811, Ile-812, His-813, Ser-814, Gln-854, and Glu-871 each coordinate ATP. Mg(2+) is bound by residues Gln-854, Glu-871, and Asn-873. Positions 854, 871, and 873 each coordinate Mn(2+). One can recognise an MGS-like domain in the interval 967–1104 (ERLPLTGTVF…KTIQEYCPNF (138 aa)). Residues 967-1104 (ERLPLTGTVF…KTIQEYCPNF (138 aa)) are allosteric domain.

The protein belongs to the CarB family. As to quaternary structure, composed of two chains; the small (or glutamine) chain promotes the hydrolysis of glutamine to ammonia, which is used by the large (or ammonia) chain to synthesize carbamoyl phosphate. Tetramer of heterodimers (alpha,beta)4. Mg(2+) is required as a cofactor. Requires Mn(2+) as cofactor.

It carries out the reaction hydrogencarbonate + L-glutamine + 2 ATP + H2O = carbamoyl phosphate + L-glutamate + 2 ADP + phosphate + 2 H(+). The enzyme catalyses hydrogencarbonate + NH4(+) + 2 ATP = carbamoyl phosphate + 2 ADP + phosphate + 2 H(+). The protein operates within amino-acid biosynthesis; L-arginine biosynthesis; carbamoyl phosphate from bicarbonate: step 1/1. It participates in pyrimidine metabolism; UMP biosynthesis via de novo pathway; (S)-dihydroorotate from bicarbonate: step 1/3. Functionally, large subunit of the glutamine-dependent carbamoyl phosphate synthetase (CPSase). CPSase catalyzes the formation of carbamoyl phosphate from the ammonia moiety of glutamine, carbonate, and phosphate donated by ATP, constituting the first step of 2 biosynthetic pathways, one leading to arginine and/or urea and the other to pyrimidine nucleotides. The large subunit (synthetase) binds the substrates ammonia (free or transferred from glutamine from the small subunit), hydrogencarbonate and ATP and carries out an ATP-coupled ligase reaction, activating hydrogencarbonate by forming carboxy phosphate which reacts with ammonia to form carbamoyl phosphate. This chain is Carbamoyl phosphate synthase large chain, found in Nostoc sp. (strain PCC 7120 / SAG 25.82 / UTEX 2576).